A 382-amino-acid polypeptide reads, in one-letter code: Phenylalanine dehydrogenase (382 aa).

NAD(+) is bound at residue arginine 54. An L-phenylalanine-binding site is contributed by lysine 78. The Proton donor/acceptor role is filled by lysine 90. Residues aspartate 125, serine 156, threonine 160, 190 to 196, 213 to 214, 253 to 254, and 274 to 276 each bind NAD(+); these read GLGKVGY, DI, AF, and SAN. Asparagine 276 lines the L-phenylalanine pocket.

This sequence belongs to the Glu/Leu/Phe/Val dehydrogenases family.

The catalysed reaction is L-phenylalanine + NAD(+) + H2O = 3-phenylpyruvate + NH4(+) + NADH + H(+). With respect to regulation, activity is not affected by the metal chelating agent EDTA. Addition of 1 mM Mg(2+) results in 15% increase in activity, while the enzyme is strongly inhibited by 1 mM Fe(3+), Fe(2+), Cu(2+), Zn(2+) and Ag(+). In terms of biological role, catalyzes the reversible NAD(+)-dependent oxidative deamination of L-phenylalanine to phenylpyruvate. Can also catalyze the oxidative deamination of several other amino acids, with much lower efficiency. Shows activity towards various bulky aromatic alpha-keto acids/esters and (S)-amine alcohols. Can catalyze the amination of 3-(2-chlorophenyl)-2-oxopropionic acid (CPOA) to produce 2-chloro-L-phenylalanine (2-Cl-Phe), a chemical compound used in the pharmaceutical and biotechnology industries. Shows a preference for amination over deamination. The chain is Phenylalanine dehydrogenase from Bacillus thermotolerans (Quasibacillus thermotolerans).